A 327-amino-acid polypeptide reads, in one-letter code: Tetraacyldisaccharide 4'-kinase (327 aa).

An ATP-binding site is contributed by 52–59 (TLGGAGKT).

The protein belongs to the LpxK family.

It catalyses the reaction a lipid A disaccharide + ATP = a lipid IVA + ADP + H(+). It participates in glycolipid biosynthesis; lipid IV(A) biosynthesis; lipid IV(A) from (3R)-3-hydroxytetradecanoyl-[acyl-carrier-protein] and UDP-N-acetyl-alpha-D-glucosamine: step 6/6. In terms of biological role, transfers the gamma-phosphate of ATP to the 4'-position of a tetraacyldisaccharide 1-phosphate intermediate (termed DS-1-P) to form tetraacyldisaccharide 1,4'-bis-phosphate (lipid IVA). In Methylorubrum extorquens (strain CM4 / NCIMB 13688) (Methylobacterium extorquens), this protein is Tetraacyldisaccharide 4'-kinase.